The primary structure comprises 69 residues: Large ribosomal subunit protein bL28 (69 aa).

The protein belongs to the bacterial ribosomal protein bL28 family.

The sequence is that of Large ribosomal subunit protein bL28 from Nitratidesulfovibrio vulgaris (strain ATCC 29579 / DSM 644 / CCUG 34227 / NCIMB 8303 / VKM B-1760 / Hildenborough) (Desulfovibrio vulgaris).